The sequence spans 459 residues: MSADQEAKEDELLALASIYDEEEFHRAESGKEGEIHLCLELPPNFKLLVKGQKSAEHNISFLPPLVLSFDLPDDYPSTSAPIFTISSKWLTRVQITALCRKLDELWEENQGNVVLFTWIQFLKEETLDFLGIQSPLEIQRSGSQPQCEPAQKHAADASGEKSKVQDLDPRAVQEVDAQTDILTQLLDFDEAQKQRVFDGKAFCCGICYSEKLGCDCLLFKECEHVYCKACIKEYFQIQIKDGKVQCLNCPEPKCASTATPTQVKLLVGEDEFARYDRLLLQSSLDLMADVVYCPRMSCCMAVMVEPDSTMGICPSCRYAFCTLCRRSYHGLSHCIATADELRSLRDEYLSSSEEGKKFLEKRFGKRVIQRAVEESFSTDWLKTNCKQCPCCGTNIQKAHGCNKMTCSSCQKYFCWICLGALSRVNPYSHFNNPDSPCYNQLFHGMEMEEDEAFGSDEDD.

The 120-residue stretch at aspartate 10–phenylalanine 129 folds into the RWD domain. The disordered stretch occupies residues serine 141 to proline 169. Basic and acidic residues predominate over residues alanine 150 to proline 169. Positions lysine 200–leucine 441 are TRIAD supradomain. Zn(2+) is bound by residues cysteine 204, cysteine 207, cysteine 222, histidine 224, cysteine 227, cysteine 230, cysteine 249, cysteine 254, cysteine 293, cysteine 298, cysteine 313, cysteine 316, cysteine 321, cysteine 324, histidine 329, cysteine 334, cysteine 388, and cysteine 391. 2 RING-type zinc fingers span residues cysteine 204–cysteine 249 and cysteine 204–cysteine 254. An IBR-type zinc finger spans residues alanine 273–cysteine 334. The RING-type 2; atypical zinc-finger motif lies at cysteine 388 to cysteine 417. Cysteine 401 is an active-site residue. Positions 406, 409, 414, 417, 429, and 437 each coordinate Zn(2+).

The protein belongs to the RBR family. RNF14 subfamily.

Its subcellular location is the cytoplasm. The protein resides in the nucleus. It carries out the reaction [E2 ubiquitin-conjugating enzyme]-S-ubiquitinyl-L-cysteine + [acceptor protein]-L-lysine = [E2 ubiquitin-conjugating enzyme]-L-cysteine + [acceptor protein]-N(6)-ubiquitinyl-L-lysine.. Its pathway is protein modification; protein ubiquitination. E3 ubiquitin-protein ligase that plays a key role in the RNF14-RNF25 translation quality control pathway, a pathway that takes place when a ribosome has stalled during translation, and which promotes ubiquitination and degradation of translation factors on stalled ribosomes. Recruited to stalled ribosomes by the ribosome collision sensor GCN1 and mediates 'Lys-6'-linked ubiquitination of target proteins, leading to their degradation. Mediates ubiquitination of eef1a1/eEF1A and etf1/eRF1 translation factors on stalled ribosomes, leading to their degradation. Specifically required to resolve RNA-protein cross-links caused by reactive aldehydes, which trigger translation stress by stalling ribosomes: acts by catalying 'Lys-6'-linked ubiquitination of RNA-protein cross-links, leading to their removal by the ATP-dependent unfoldase VCP and subsequent degradation by the proteasome. Independently of its function in the response to stalled ribosomes, acts as a regulator of transcription in Wnt signaling via its interaction with TCF transcription factors (tcf7/tcf1, tcf7l1/tcf3 and tcf7l2/tcf4). The sequence is that of E3 ubiquitin-protein ligase RNF14 from Danio rerio (Zebrafish).